A 706-amino-acid polypeptide reads, in one-letter code: Glutamine-dependent NAD(+) synthetase (706 aa).

Residues 5 to 275 (VTVATCALNQ…VEVLTATLDL (271 aa)) form the CN hydrolase domain. Glutamate 45 (proton acceptor; for glutaminase activity) is an active-site residue. The active-site For glutaminase activity is lysine 114. Residue cysteine 175 is the Nucleophile; for glutaminase activity of the active site. Residues 325–706 (YHSPEEEISL…AEPQSLDGVD (382 aa)) are ligase. 355–362 (PLSGGVDS) contacts ATP. Serine 357 is a catalytic residue.

It in the C-terminal section; belongs to the NAD synthetase family. In terms of assembly, homohexamer.

The catalysed reaction is deamido-NAD(+) + L-glutamine + ATP + H2O = L-glutamate + AMP + diphosphate + NAD(+) + H(+). The protein operates within cofactor biosynthesis; NAD(+) biosynthesis; NAD(+) from deamido-NAD(+) (L-Gln route): step 1/1. Functionally, catalyzes the final step of the nicotinamide adenine dinucleotide (NAD) de novo synthesis pathway, the ATP-dependent amidation of deamido-NAD using L-glutamine as a nitrogen source. This is Glutamine-dependent NAD(+) synthetase (NADSYN1) from Homo sapiens (Human).